The primary structure comprises 449 residues: Xylose isomerase (449 aa).

Catalysis depends on residues histidine 103 and aspartate 106. Mg(2+) contacts are provided by glutamate 234, glutamate 270, histidine 273, aspartate 298, aspartate 309, aspartate 311, and aspartate 342.

The protein belongs to the xylose isomerase family. As to quaternary structure, homotetramer. Mg(2+) is required as a cofactor.

The protein resides in the cytoplasm. The enzyme catalyses alpha-D-xylose = alpha-D-xylulofuranose. Involved in D-xylose catabolism. The protein is Xylose isomerase (xylA) of Lactiplantibacillus pentosus (Lactobacillus pentosus).